Here is a 414-residue protein sequence, read N- to C-terminus: MGAGKKIFGIVLAGGEGKRLMPLTTDRAKPAVPFGGQYRLIDFALSNLINSQLRQIVVLTQYKSHSLDRHISQTWRPDGMLNSYIASVPAQQRLGKRWFSGSADAILQSINLLRDEKPDIVVVVGADHVYRMDFGQMIRSHLDSGSSVTVAAIRQPVSLADQFGVIEVDPASPERIAAFREKPSDPVALPESPGEVLASMGNYVFTADALIAAVRRDADRPDSNHDMGGDIIPDFVARGEAGVYDFTNNEVPGSTDRDRYYWRDVGTIDSFFEAHQDLISALPVFNLYNRQWPIFSQVLNSPPAKIVRDGRGALGTTIDSIVSLGSVISGAHLERSVLGPWATVDSGAKVIDSVVFERALIEPNAFVGRAILDKDVVVAAGASIGVDPDRDRARGFTVTESGITVVGKGVHVVP.

Residues Gly164, 181–182 (EK), and Ser199 contribute to the alpha-D-glucose 1-phosphate site.

It belongs to the bacterial/plant glucose-1-phosphate adenylyltransferase family. As to quaternary structure, homotetramer.

The catalysed reaction is alpha-D-glucose 1-phosphate + ATP + H(+) = ADP-alpha-D-glucose + diphosphate. The protein operates within glycan biosynthesis; glycogen biosynthesis. Involved in the biosynthesis of ADP-glucose, a building block required for the elongation reactions to produce glycogen. Catalyzes the reaction between ATP and alpha-D-glucose 1-phosphate (G1P) to produce pyrophosphate and ADP-Glc. The sequence is that of Glucose-1-phosphate adenylyltransferase from Leifsonia xyli subsp. xyli (strain CTCB07).